The primary structure comprises 538 residues: Syncytin-1 (538 aa).

Positions 1–20 (MALPYHIFLFTVLLPSFTLT) are cleaved as a signal peptide. The Extracellular segment spans residues 21–443 (APPPCRCMTS…NTGPWGLLSQ (423 aa)). Asn169 carries N-linked (GlcNAc...) asparagine glycosylation. The CXXC motif lies at 186-189 (CWIC). Disulfide bonds link Cys186–Cys189, Cys186–Cys405, and Cys397–Cys404. 5 N-linked (GlcNAc...) asparagine glycosylation sites follow: Asn208, Asn214, Asn234, Asn242, and Asn281. The fusion peptide stretch occupies residues 320–340 (ILPFVIGAGVLGALGTGIGGI). The tract at residues 380–396 (LQNRRALDLLTAERGGT) is immunosuppression. The CX6CC motif lies at 397-405 (CLFLGEECC). N-linked (GlcNAc...) asparagine glycosylation is present at Asn409. Residues 444–464 (WMPWILPFLGPLAAIILLLLF) form a helical membrane-spanning segment. The segment at 465-484 (GPCIFNLLVNFVSSRIEAVK) is essential for the fusiogenic function. Residues 465–538 (GPCIFNLLVN…LLRPNSAGSS (74 aa)) are Cytoplasmic-facing. A disordered region spans residues 496–538 (KIYRRPLDRPASPRSDVNDIKGTPPEEILTAQPLLRPNSAGSS).

The protein belongs to the gamma type-C retroviral envelope protein family. HERV class-I W env subfamily. In terms of assembly, the mature envelope protein (Env) consists of a trimer of SU-TM heterodimers attached probably by a labile interchain disulfide bond. Interacts with the C-type lectin CD209/DC-SIGN. Specific enzymatic cleavages in vivo yield mature proteins. Envelope glycoproteins are synthesized as an inactive precursor that is heavily N-glycosylated and processed likely by furin in the Golgi to yield the mature SU and TM proteins. The cleavage site between SU and TM requires the minimal sequence [KR]-X-[KR]-R. In terms of processing, the CXXC motif is highly conserved across a broad range of retroviral envelope proteins. It is thought to participate in the formation of a labile disulfide bond possibly with the CX6CC motif present in the transmembrane protein.

The protein localises to the cell membrane. It is found in the virion. Its function is as follows. This endogenous retroviral envelope protein has retained its original fusogenic properties and participates in trophoblast fusion and the formation of a syncytium during placenta morphogenesis. May recognize and induce fusion through binding of SLC1A4 and SLC1A5. In terms of biological role, endogenous envelope proteins may have kept, lost or modified their original function during evolution. Retroviral envelope proteins mediate receptor recognition and membrane fusion during early infection. The surface protein (SU) mediates receptor recognition, while the transmembrane protein (TM) acts as a class I viral fusion protein. The protein may have at least 3 conformational states: pre-fusion native state, pre-hairpin intermediate state, and post-fusion hairpin state. During viral and target cell membrane fusion, the coiled coil regions (heptad repeats) assume a trimer-of-hairpins structure, positioning the fusion peptide in close proximity to the C-terminal region of the ectodomain. The formation of this structure appears to drive apposition and subsequent fusion of membranes. This chain is Syncytin-1 (ERVW-1), found in Pan troglodytes (Chimpanzee).